The following is a 149-amino-acid chain: D-aminoacyl-tRNA deacylase (149 aa).

The Gly-cisPro motif, important for rejection of L-amino acids motif lies at 137–138; sequence GP.

This sequence belongs to the DTD family. In terms of assembly, homodimer.

Its subcellular location is the cytoplasm. The catalysed reaction is glycyl-tRNA(Ala) + H2O = tRNA(Ala) + glycine + H(+). It catalyses the reaction a D-aminoacyl-tRNA + H2O = a tRNA + a D-alpha-amino acid + H(+). Functionally, an aminoacyl-tRNA editing enzyme that deacylates mischarged D-aminoacyl-tRNAs. Also deacylates mischarged glycyl-tRNA(Ala), protecting cells against glycine mischarging by AlaRS. Acts via tRNA-based rather than protein-based catalysis; rejects L-amino acids rather than detecting D-amino acids in the active site. By recycling D-aminoacyl-tRNA to D-amino acids and free tRNA molecules, this enzyme counteracts the toxicity associated with the formation of D-aminoacyl-tRNA entities in vivo and helps enforce protein L-homochirality. The sequence is that of D-aminoacyl-tRNA deacylase from Clostridium kluyveri (strain ATCC 8527 / DSM 555 / NBRC 12016 / NCIMB 10680 / K1).